A 37-amino-acid polypeptide reads, in one-letter code: ECATKNKRCADWAGPWCCDGLYCSCRSYPGCMCRPSS.

4 disulfide bridges follow: Cys-2/Cys-18, Cys-9/Cys-23, Cys-17/Cys-33, and Cys-25/Cys-31. Position 37 is a serine amide (Ser-37).

It belongs to the neurotoxin 07 (Beta/delta-agtx) family. 01 (aga-2) subfamily. As to expression, expressed by the venom gland.

It localises to the secreted. Functionally, insecticidal neurotoxin that induces an irreversible spastic paralysis when injected into insects. Modifies presynaptic voltage-gated sodium channels (Nav), causing them to open at the normal resting potential of the nerve. This leads to spontaneous release of neurotransmitter and repetitive action potentials in motor neurons. In Agelenopsis aperta (North American funnel-web spider), this protein is Mu-agatoxin-Aa1b.